A 289-amino-acid polypeptide reads, in one-letter code: MLRRAVRERRQFIYKRNQELQEAKLNEKRRALRKALEGNKELNKDLQEDSQLQKDYKYDESRATQEETETNLDDEYHRLGEREPKVLVTTSREPSSRLAQFAKEVRLLIPNSYRLNRGNIVVGSLVEAARANDITDIVILHEHRGIPDGLVISHLPYGPTLSFSLHNVVLRHDIPNTGTMSEAYPHLIFENLTSKLGKRVKTALSALFPPDPKDTTPRVVTFANTDDYISFRHHIYAKTGPKQIILSEAGPRFEMKLFEITLGTVDMVDADVEWKLKPYQRHKRDVLAE.

Residues 42-65 (LNKDLQEDSQLQKDYKYDESRATQ) show a composition bias toward basic and acidic residues. Residues 42 to 82 (LNKDLQEDSQLQKDYKYDESRATQEETETNLDDEYHRLGER) form a disordered region. In terms of domain architecture, Brix spans 84–266 (PKVLVTTSRE…LFEITLGTVD (183 aa)).

As to quaternary structure, component of a heterotrimeric complex containing imp3, imp4 and mpp10.

Its subcellular location is the nucleus. The protein localises to the nucleolus. Component of the U3 small nucleolar ribonucleoprotein. Required for the early cleavages at sites A0, A1 and A2 during 18S ribosomal pre-RNA processing. This is U3 small nucleolar ribonucleoprotein protein imp4 (imp4) from Schizosaccharomyces pombe (strain 972 / ATCC 24843) (Fission yeast).